The sequence spans 336 residues: Dihydroorotate dehydrogenase (quinone) (336 aa).

Residues 62–66 and threonine 86 contribute to the FMN site; that span reads AGLDK. Lysine 66 contributes to the substrate binding site. A substrate-binding site is contributed by 111–115; it reads NRFGF. Positions 139 and 172 each coordinate FMN. Position 172 (asparagine 172) interacts with substrate. Residue serine 175 is the Nucleophile of the active site. Asparagine 177 is a substrate binding site. FMN-binding residues include lysine 217 and threonine 245. Substrate is bound at residue 246–247; the sequence is NT. FMN contacts are provided by residues glycine 268, glycine 297, and 318–319; that span reads YS.

The protein belongs to the dihydroorotate dehydrogenase family. Type 2 subfamily. In terms of assembly, monomer. The cofactor is FMN.

The protein localises to the cell membrane. It carries out the reaction (S)-dihydroorotate + a quinone = orotate + a quinol. It participates in pyrimidine metabolism; UMP biosynthesis via de novo pathway; orotate from (S)-dihydroorotate (quinone route): step 1/1. In terms of biological role, catalyzes the conversion of dihydroorotate to orotate with quinone as electron acceptor. The polypeptide is Dihydroorotate dehydrogenase (quinone) (Photobacterium profundum (strain SS9)).